Consider the following 361-residue polypeptide: MTKGKGRNPGASGLDKHLKRKTHLERSQPKSRQHLGQLEKHKDHVLRAKKRKVKVRRLQEIKRAAAQRNPDEFNIGMTKAVMDVANGRMRQRRVRLVESDRKKDMQTTIEHNRRNVQYLEFKAQADQQRATELLNEEAAAALTSTAPQNKHIVFVNSEEEFRSFNPLKHFDVTPEMMRQHPAVRGRIRVLEKTVMPEEILMSGGHQIKSAAQKRKERREVQEKMRRSGADATPETRAAFVERLRAKKELKQYQFTDLLEEVKRESEATASSSKGAPGDDGEQEEAAAQDEVTRLLEWRREQERQAAIATARHVREVGQRIQRSKSLSALAKSIRKQSQGIKRQMEQRRESRFKPGATRRAR.

4 disordered regions span residues Met-1 to Lys-52, Leu-200 to Thr-235, Lys-262 to Leu-295, and Arg-311 to Arg-361. Residues His-17–Gln-33 are compositionally biased toward basic residues. Composition is skewed to basic and acidic residues over residues Gln-37–Leu-46 and Arg-217–Gly-228. Acidic residues predominate over residues Asp-278–Ala-287. Basic and acidic residues predominate over residues Arg-342–Phe-352.

The protein belongs to the UTP11 family. As to quaternary structure, component of the ribosomal small subunit (SSU) processome.

Its subcellular location is the nucleus. The protein localises to the nucleolus. Involved in nucleolar processing of pre-18S ribosomal RNA. The sequence is that of Probable U3 small nucleolar RNA-associated protein 11 from Leishmania major.